The primary structure comprises 156 residues: Arginine repressor (156 aa).

Belongs to the ArgR family.

The protein resides in the cytoplasm. It functions in the pathway amino-acid biosynthesis; L-arginine biosynthesis [regulation]. Its function is as follows. Regulates arginine biosynthesis genes. The chain is Arginine repressor from Proteus mirabilis (strain HI4320).